Consider the following 303-residue polypeptide: Quinolinate synthase (303 aa).

Iminosuccinate contacts are provided by H25 and S42. Residue C87 participates in [4Fe-4S] cluster binding. Residues 113–115 (YVN) and S130 each bind iminosuccinate. [4Fe-4S] cluster is bound at residue C173. Iminosuccinate is bound by residues 199 to 201 (HPE) and T216. C261 contacts [4Fe-4S] cluster.

Belongs to the quinolinate synthase family. Type 2 subfamily. Requires [4Fe-4S] cluster as cofactor.

The protein resides in the cytoplasm. The catalysed reaction is iminosuccinate + dihydroxyacetone phosphate = quinolinate + phosphate + 2 H2O + H(+). It functions in the pathway cofactor biosynthesis; NAD(+) biosynthesis; quinolinate from iminoaspartate: step 1/1. Its function is as follows. Catalyzes the condensation of iminoaspartate with dihydroxyacetone phosphate to form quinolinate. The protein is Quinolinate synthase of Desulforudis audaxviator (strain MP104C).